Reading from the N-terminus, the 65-residue chain is MTKYSKGNKVEYHPIGGPSGTSTSTGVIQQVIKNDSGEETRYEILNDHTGKAATYKERNISRILD.

Residues 1–25 (MTKYSKGNKVEYHPIGGPSGTSTST) form a disordered region.

In terms of biological role, may play a role in primary metabolism. This chain is Putative primary metabolism protein prl65, found in Schizosaccharomyces pombe (strain 972 / ATCC 24843) (Fission yeast).